Consider the following 180-residue polypeptide: MMSNTILPRNFYERPTLVVAGELLGKMLKFSNFSGIITEVEAYIGMSDPACHAAKGYTNRTSVMFGMPGFSYVYFIYGMYYCLNIVTEAEGFPAAVLIRGLKLIEPLEANLGGPGILCKRLNITKEHNKQDLTISHEFCVYESHLKPDYVCTPRIGISKGQEKFWRFKNLRSCVDYLPIG.

This sequence belongs to the DNA glycosylase MPG family.

This is Putative 3-methyladenine DNA glycosylase from Wolbachia pipientis wMel.